The primary structure comprises 79 residues: Sperm-specific basic nuclear protein SP4 (79 aa).

Residues 1-79 (MSKVSGGSRR…ARDYGSDYRS (79 aa)) form a disordered region. The span at 9-60 (RRTRARRPMSNRRGRRSQSAAHRSRAQRRRRRTGTTRRARTSTARRARTRTA) shows a compositional bias: basic residues. 2 repeats span residues 45 to 52 (RRARTSTA) and 53 to 60 (RRARTRTA). Over residues 61–79 (RRSDLTRMMARDYGSDYRS) the composition is skewed to basic and acidic residues.

It is found in the nucleus. The chain is Sperm-specific basic nuclear protein SP4 (sp4-a) from Xenopus laevis (African clawed frog).